Consider the following 91-residue polypeptide: Putative regulatory protein Cphy_2880 (91 aa).

The protein belongs to the RemA family.

The chain is Putative regulatory protein Cphy_2880 from Lachnoclostridium phytofermentans (strain ATCC 700394 / DSM 18823 / ISDg) (Clostridium phytofermentans).